Consider the following 222-residue polypeptide: MEFLTHSLLPLHEVCALQQRLSAPNLPWRDGRLTAGDQAALVKKNYQLDPNAELSLAISNCISTALTSDPLVKSFSLVRKVHSLLVSRSSAGESYGWHVDNPFSRNGRRDLSFTCFLSDEDSYEGGSLMIQTGGEDTKEFRLPPGQVVLYPSSTLHCVTPVLSGDRYVCVGWIESYVKAADDRSMLFNIDAGARGLLARHGRSDELDLIFQSYTNAVRRLSS.

Residues 80–175 enclose the Fe2OG dioxygenase domain; that stretch reads KVHSLLVSRS…RYVCVGWIES (96 aa). Positions 98, 100, and 156 each coordinate Fe cation. 2-oxoglutarate is bound at residue Arg166.

The cofactor is Fe(2+). L-ascorbate serves as cofactor.

In Synechococcus sp. (strain CC9605), this protein is PKHD-type hydroxylase Syncc9605_1577.